Reading from the N-terminus, the 444-residue chain is Amino-acid acetyltransferase (444 aa).

One can recognise an N-acetyltransferase domain in the interval 295-434 (EKVRRANIND…QALYNYQRRS (140 aa)).

It belongs to the acetyltransferase family. ArgA subfamily. Homohexamer.

It localises to the cytoplasm. It catalyses the reaction L-glutamate + acetyl-CoA = N-acetyl-L-glutamate + CoA + H(+). Its pathway is amino-acid biosynthesis; L-arginine biosynthesis; N(2)-acetyl-L-ornithine from L-glutamate: step 1/4. This chain is Amino-acid acetyltransferase, found in Proteus mirabilis (strain HI4320).